The primary structure comprises 696 residues: Putative cyclic nucleotide-gated ion channel 13 (696 aa).

Residues 1–81 lie on the Cytoplasmic side of the membrane; it reads MAFGRNNRVR…QGSFLQNWNK (81 aa). Residues 45-65 are disordered; that stretch reads KPLSFGSHNKKRDSNSSTTTQ. The chain crosses the membrane as a helical span at residues 82-102; the sequence is IFLFASVIALAIDPLFFYIPI. The Extracellular portion of the chain corresponds to 103–116; that stretch reads VDGERHCLNLHRNL. A helical membrane pass occupies residues 117–137; it reads EIAASVLRTFIDAFYIIHIVF. Residues 138–170 are Cytoplasmic-facing; that stretch reads QFRTAYISPSSRVFGRGELVDDPKAIAIKYLSS. A helical transmembrane segment spans residues 171-191; the sequence is YFIIDLLSILPLPQLVVLAVI. The Extracellular segment spans residues 192–204; that stretch reads PNVNKPVSLITKD. The chain crosses the membrane as a helical span at residues 205–225; the sequence is YLITVIFTQYIPRILRIYPLY. Residues 226–243 lie on the Cytoplasmic side of the membrane; the sequence is TEVTRTSGIVTETAWAGA. Residues 244-264 form a helical membrane-spanning segment; sequence AWNLSLYMLASHVFGALWYLI. Topologically, residues 265 to 367 are extracellular; sequence SVEREDRCWR…GQNLNTSKFV (103 aa). Residues 368–388 form a helical membrane-spanning segment; it reads GEIIFAVSICISGLVLFALLI. Topologically, residues 389–696 are cytoplasmic; the sequence is GNMQKYLEST…SEPDFSLRNP (308 aa). Residues 474–598 and E545 contribute to the a nucleoside 3',5'-cyclic phosphate site; that span reads LFEI…SKQL. The interval 590–605 is calmodulin-binding; the sequence is FRRLHSKQLQHTFRFY. The region spanning 610–639 is the IQ domain; the sequence is RTWGASFIQAAWRRHCRRKLARSLTEEEDR. Residues 677 to 696 are disordered; it reads NNLPLLPPKPSEPDFSLRNP.

It belongs to the cyclic nucleotide-gated cation channel (TC 1.A.1.5) family. As to quaternary structure, homotetramer or heterotetramer.

The protein localises to the cell membrane. In terms of biological role, putative cyclic nucleotide-gated ion channel. In Arabidopsis thaliana (Mouse-ear cress), this protein is Putative cyclic nucleotide-gated ion channel 13 (CNGC13).